A 294-amino-acid chain; its full sequence is 1D-myo-inositol 2-acetamido-2-deoxy-alpha-D-glucopyranoside deacetylase (294 aa).

Zn(2+) contacts are provided by histidine 13, aspartate 16, and histidine 148.

This sequence belongs to the MshB deacetylase family. It depends on Zn(2+) as a cofactor.

The catalysed reaction is 1D-myo-inositol 2-acetamido-2-deoxy-alpha-D-glucopyranoside + H2O = 1D-myo-inositol 2-amino-2-deoxy-alpha-D-glucopyranoside + acetate. Functionally, catalyzes the deacetylation of 1D-myo-inositol 2-acetamido-2-deoxy-alpha-D-glucopyranoside (GlcNAc-Ins) in the mycothiol biosynthesis pathway. This Geodermatophilus obscurus (strain ATCC 25078 / DSM 43160 / JCM 3152 / CCUG 61914 / KCC A-0152 / KCTC 9177 / NBRC 13315 / NRRL B-3577 / G-20) protein is 1D-myo-inositol 2-acetamido-2-deoxy-alpha-D-glucopyranoside deacetylase.